We begin with the raw amino-acid sequence, 393 residues long: Lipid-A-disaccharide synthase (393 aa).

The protein belongs to the LpxB family.

The enzyme catalyses a lipid X + a UDP-2-N,3-O-bis[(3R)-3-hydroxyacyl]-alpha-D-glucosamine = a lipid A disaccharide + UDP + H(+). The protein operates within bacterial outer membrane biogenesis; LPS lipid A biosynthesis. In terms of biological role, condensation of UDP-2,3-diacylglucosamine and 2,3-diacylglucosamine-1-phosphate to form lipid A disaccharide, a precursor of lipid A, a phosphorylated glycolipid that anchors the lipopolysaccharide to the outer membrane of the cell. This Actinobacillus pleuropneumoniae serotype 3 (strain JL03) protein is Lipid-A-disaccharide synthase.